A 141-amino-acid chain; its full sequence is MAKKIIAKIKLQLEAGKATPAPPVGPALGQHGVNIMDFCKKFNAVTADKPGMVFPAVITVYADRSFTFELKTPPASFLILKAAGIKKGSGEPNKVKVGKITKAQVEEIAKIKMPDLNARTLEAAMKIIEGTARNMGVEVVD.

This sequence belongs to the universal ribosomal protein uL11 family. Part of the ribosomal stalk of the 50S ribosomal subunit. Interacts with L10 and the large rRNA to form the base of the stalk. L10 forms an elongated spine to which L12 dimers bind in a sequential fashion forming a multimeric L10(L12)X complex. In terms of processing, one or more lysine residues are methylated.

Its function is as follows. Forms part of the ribosomal stalk which helps the ribosome interact with GTP-bound translation factors. This Kosmotoga olearia (strain ATCC BAA-1733 / DSM 21960 / TBF 19.5.1) protein is Large ribosomal subunit protein uL11.